Reading from the N-terminus, the 344-residue chain is Protein pelota homolog (344 aa).

The protein belongs to the eukaryotic release factor 1 family. Pelota subfamily. Monomer. A divalent metal cation serves as cofactor.

It localises to the cytoplasm. Its function is as follows. May function in recognizing stalled ribosomes, interact with stem-loop structures in stalled mRNA molecules, and effect endonucleolytic cleavage of the mRNA. May play a role in the release non-functional ribosomes and degradation of damaged mRNAs. Has endoribonuclease activity. This Saccharolobus islandicus (strain Y.N.15.51 / Yellowstone #2) (Sulfolobus islandicus) protein is Protein pelota homolog.